A 480-amino-acid chain; its full sequence is Chromosomal replication initiator protein DnaA (480 aa).

Residues 1-71 (MRHDALFERV…TTLVQQEDSE (71 aa)) are domain I, interacts with DnaA modulators. A domain II region spans residues 71 to 137 (EILKVEILVR…RPVQAPLFGS (67 aa)). Residues 138–360 (PLDQRYGFDS…GAFNQLLFRR (223 aa)) are domain III, AAA+ region. Residues G184, G186, K187, and T188 each coordinate ATP. The interval 361–480 (SFEPQLSIER…IELLKRLINE (120 aa)) is domain IV, binds dsDNA.

It belongs to the DnaA family. As to quaternary structure, oligomerizes as a right-handed, spiral filament on DNA at oriC.

It is found in the cytoplasm. Its function is as follows. Plays an essential role in the initiation and regulation of chromosomal replication. ATP-DnaA binds to the origin of replication (oriC) to initiate formation of the DNA replication initiation complex once per cell cycle. Binds the DnaA box (a 9 base pair repeat at the origin) and separates the double-stranded (ds)DNA. Forms a right-handed helical filament on oriC DNA; dsDNA binds to the exterior of the filament while single-stranded (ss)DNA is stabiized in the filament's interior. The ATP-DnaA-oriC complex binds and stabilizes one strand of the AT-rich DNA unwinding element (DUE), permitting loading of DNA polymerase. After initiation quickly degrades to an ADP-DnaA complex that is not apt for DNA replication. Binds acidic phospholipids. The protein is Chromosomal replication initiator protein DnaA of Rhizobium meliloti (strain 1021) (Ensifer meliloti).